The primary structure comprises 392 residues: Galactose-1-phosphate uridylyltransferase (392 aa).

Zn(2+)-binding residues include Cys-52 and Cys-55. UDP-alpha-D-glucose-binding positions include Ala-61 and 77–78 (ND). His-126 lines the Zn(2+) pocket. Asn-194 serves as a coordination point for UDP-alpha-D-glucose. His-205 contributes to the Zn(2+) binding site. The Tele-UMP-histidine intermediate role is filled by His-207. Position 209 (Gln-209) interacts with UDP-alpha-D-glucose. Glu-223, His-323, His-340, and His-342 together coordinate Fe cation. UDP-alpha-D-glucose contacts are provided by residues 355 to 358 (KFLV) and 360 to 361 (YE).

It belongs to the galactose-1-phosphate uridylyltransferase type 1 family. As to quaternary structure, homodimer. Requires Zn(2+) as cofactor.

It catalyses the reaction alpha-D-galactose 1-phosphate + UDP-alpha-D-glucose = alpha-D-glucose 1-phosphate + UDP-alpha-D-galactose. Its pathway is carbohydrate metabolism; galactose metabolism. This is Galactose-1-phosphate uridylyltransferase (gal-7) from Neurospora crassa (strain ATCC 24698 / 74-OR23-1A / CBS 708.71 / DSM 1257 / FGSC 987).